A 579-amino-acid chain; its full sequence is Viral transcription factor IE2 (579 aa).

Residues 1-11 (MESSAKRKMDP) are compositionally biased toward basic and acidic residues. Disordered stretches follow at residues 1–30 (MESS…TPVT) and 99–161 (DSSS…VIIK). Positions 99-133 (DSSSTGPTLTTHSCSVSSAPLNKPTPTSVAVTNTP) are enriched in polar residues. Residues Lys175 and Lys180 each participate in a glycyl lysine isopeptide (Lys-Gly) (interchain with G-Cter in SUMO) cross-link. The SUMO-interacting motif 1/SIM1 motif lies at 199–202 (CIVI). The non-covalent SUMO1 binding region (SIM) stretch occupies residues 200 to 208 (IVISDSEEE). Phosphoserine is present on residues Ser203 and Ser205. The tract at residues 206 to 335 (EEEQGEEVET…SKRISELDNE (130 aa)) is disordered. Low complexity-rich tracts occupy residues 216–236 (RGAT…TSPT), 259–270 (SSSSSSCSSASD), and 301–316 (AASS…SSGG). The short motif at 409–412 (IQII) is the SUMO-interacting motif 1/SIM2 element. The short motif at 500 to 503 (VDLL) is the SUMO-interacting motif 1/SIM3 element.

The protein belongs to the HHV-5 IE2 protein family. Interacts with host SUMO-modified form of TATA-binding protein (TBP)-associated factor 12/TAF12 in a SIM-dependent manner; this interaction increases the transactivation activity of IE2. Interacts with host CHAF1A. Interacts with several components of the host transcriptional machinery including TBP, TF2B and CREB1. Interacts with host DNA replication licensing factor MCM3. Interacts with host PLSCR1; this interaction inhibits IE2 transactivating activity. Phosphorylated by host CK2 at Ser-203 and Ser-205; leading to enhanced SUMOylation. Post-translationally, SUMOylated; SUMOylation is enhanced when IE2 is phosphorylated by host CK2. The sumoylation is necessary for efficient replication of the virus and thus for the function of this viral transcription factor.

Its subcellular location is the host nucleus. Functionally, stimulates viral early and late gene expression and thus play a crucial role in the regulation of productive infection. Selectively drives host RNA Pol II transcription initiation at a subset of viral early-late and late promoters without substantially affecting Pol II transcription of expressed host genes. Mechanistically, forms a repressive complex at the major immediate-early promoter region involving direct association with host nucleosomes and TBP. Concerning activation, stimulates transcription by binding nearby, but not within, core promoter regions. In addition, activates quiescent cells to reenter the cell cycle and up-regulates several E2F-responsive genes, which are responsible for pushing the cell into S phase. In S-phase, inhibits cellular DNA synthesis and blocks further cell cycle progression. This Homo sapiens (Human) protein is Viral transcription factor IE2 (UL122).